A 359-amino-acid polypeptide reads, in one-letter code: DNA-directed RNA polymerase RPB3-11 homolog (359 aa).

It in the N-terminal section; belongs to the archaeal RpoD/eukaryotic RPB3 RNA polymerase subunit family. This sequence in the C-terminal section; belongs to the archaeal RpoL/eukaryotic RPB11/RPC19 RNA polymerase subunit family. In terms of assembly, part of the viral DNA-directed RNA polymerase that consists of 8 polII-like subunits (RPB1, RPB2, RPB3, RPB5, RPB6, RPB7, RPB9, RPB10), a capping enzyme and a termination factor.

It is found in the host cytoplasm. Its subcellular location is the virion. Its function is as follows. Component of the DNA-directed RNA polymerase (RNAP) that catalyzes the transcription in the cytoplasm of viral DNA into RNA using the four ribonucleoside triphosphates as substrates. This chain is DNA-directed RNA polymerase RPB3-11 homolog, found in Ornithodoros (relapsing fever ticks).